Consider the following 510-residue polypeptide: NAD(P)H-quinone oxidoreductase subunit 2 A, chloroplastic (510 aa).

14 helical membrane-spanning segments follow: residues 31–51 (LIFP…IDLT), 57–77 (IPWL…ALLF), 99–119 (IFQF…VEYI), 124–144 (MAIT…MFLC), 149–169 (LITI…LSGY), 184–204 (LLMG…LYGL), 229–249 (ISIA…LAPF), 261–281 (PTPV…ALAT), 295–315 (WHLL…LIAI), 323–343 (MLAY…IVGD), 354–374 (YMLF…LFGL), 395–415 (ALSL…AGFF), 418–438 (LYLF…IGLL), and 484–504 (MIVC…IIAI).

The protein belongs to the complex I subunit 2 family. In terms of assembly, NDH is composed of at least 16 different subunits, 5 of which are encoded in the nucleus.

It is found in the plastid. The protein resides in the chloroplast thylakoid membrane. The catalysed reaction is a plastoquinone + NADH + (n+1) H(+)(in) = a plastoquinol + NAD(+) + n H(+)(out). It catalyses the reaction a plastoquinone + NADPH + (n+1) H(+)(in) = a plastoquinol + NADP(+) + n H(+)(out). Its function is as follows. NDH shuttles electrons from NAD(P)H:plastoquinone, via FMN and iron-sulfur (Fe-S) centers, to quinones in the photosynthetic chain and possibly in a chloroplast respiratory chain. The immediate electron acceptor for the enzyme in this species is believed to be plastoquinone. Couples the redox reaction to proton translocation, and thus conserves the redox energy in a proton gradient. The sequence is that of NAD(P)H-quinone oxidoreductase subunit 2 A, chloroplastic from Nicotiana tabacum (Common tobacco).